A 316-amino-acid chain; its full sequence is Ribosomal RNA small subunit methyltransferase H (316 aa).

Residues 37-39 (GGH), D56, F83, D106, and H113 each bind S-adenosyl-L-methionine. The disordered stretch occupies residues 276–316 (PILPSEEETKENPASRSAKLRVLRKTKSADKKYKKENSKEE). The segment covering 302 to 316 (KSADKKYKKENSKEE) has biased composition (basic and acidic residues).

This sequence belongs to the methyltransferase superfamily. RsmH family.

The protein localises to the cytoplasm. It carries out the reaction cytidine(1402) in 16S rRNA + S-adenosyl-L-methionine = N(4)-methylcytidine(1402) in 16S rRNA + S-adenosyl-L-homocysteine + H(+). Functionally, specifically methylates the N4 position of cytidine in position 1402 (C1402) of 16S rRNA. The polypeptide is Ribosomal RNA small subunit methyltransferase H (Leptospira borgpetersenii serovar Hardjo-bovis (strain L550)).